The sequence spans 65 residues: Large ribosomal subunit protein bL33c (65 aa).

It belongs to the bacterial ribosomal protein bL33 family.

The protein localises to the plastid. It is found in the chloroplast. The chain is Large ribosomal subunit protein bL33c from Gracilaria tenuistipitata var. liui (Red alga).